The chain runs to 216 residues: DNA repair and recombination protein RadB (216 aa).

Belongs to the eukaryotic RecA-like protein family. RadB subfamily.

Its function is as follows. Involved in DNA repair and in homologous recombination. May regulate the cleavage reactions of the branch-structured DNA. Has a very weak ATPase activity that is not stimulated by DNA. Binds DNA but does not promote DNA strands exchange. The sequence is that of DNA repair and recombination protein RadB from Methanococcus maripaludis (strain C5 / ATCC BAA-1333).